The primary structure comprises 236 residues: CHD1 helical C-terminal domain containing protein 1 (236 aa).

The segment at 1–29 is disordered; that stretch reads MEASDWQGGEGDKPLEKVGSVPCLERSSS. Residues 44 to 145 are CHD1 helical C-terminal domain (CHCT); it reads LSQDTFKICK…TNQTAKFLAA (102 aa). The tract at residues 197–236 is disordered; sequence LEEPRSSHCSRGDSLRKLPQKPKLKKKRIKERLESPKSCS. The span at 198–212 shows a compositional bias: basic and acidic residues; sequence EEPRSSHCSRGDSLR. The span at 214 to 226 shows a compositional bias: basic residues; it reads LPQKPKLKKKRIK. The segment covering 227-236 has biased composition (basic and acidic residues); sequence ERLESPKSCS.

As to expression, exclusively expressed in testes.

It is found in the cytoplasm. Its subcellular location is the nucleus. May play a role in regulation of apoptosis. This chain is CHD1 helical C-terminal domain containing protein 1 (Chct1), found in Mus musculus (Mouse).